The following is a 396-amino-acid chain: Imidazolonepropionase (396 aa).

Fe(3+) is bound by residues histidine 70 and histidine 72. Histidine 70 and histidine 72 together coordinate Zn(2+). Residues arginine 79, tyrosine 137, and histidine 164 each contribute to the 4-imidazolone-5-propanoate site. An N-formimidoyl-L-glutamate-binding site is contributed by tyrosine 137. Histidine 227 is a Fe(3+) binding site. Histidine 227 is a Zn(2+) binding site. Glutamine 230 lines the 4-imidazolone-5-propanoate pocket. Aspartate 301 contributes to the Fe(3+) binding site. Aspartate 301 is a binding site for Zn(2+). N-formimidoyl-L-glutamate contacts are provided by asparagine 303 and glycine 305. Position 306 (serine 306) interacts with 4-imidazolone-5-propanoate.

This sequence belongs to the metallo-dependent hydrolases superfamily. HutI family. Zn(2+) is required as a cofactor. It depends on Fe(3+) as a cofactor.

It is found in the cytoplasm. The catalysed reaction is 4-imidazolone-5-propanoate + H2O = N-formimidoyl-L-glutamate. It functions in the pathway amino-acid degradation; L-histidine degradation into L-glutamate; N-formimidoyl-L-glutamate from L-histidine: step 3/3. Functionally, catalyzes the hydrolytic cleavage of the carbon-nitrogen bond in imidazolone-5-propanoate to yield N-formimidoyl-L-glutamate. It is the third step in the universal histidine degradation pathway. The sequence is that of Imidazolonepropionase from Mycolicibacterium smegmatis (strain ATCC 700084 / mc(2)155) (Mycobacterium smegmatis).